A 197-amino-acid chain; its full sequence is UPF0462 protein C4orf33 homolog (197 aa).

It belongs to the UPF0462 family.

The polypeptide is UPF0462 protein C4orf33 homolog (Danio rerio (Zebrafish)).